A 215-amino-acid polypeptide reads, in one-letter code: Thymidylate kinase (215 aa).

Residue 11–18 participates in ATP binding; it reads GIDGAGKS.

The protein belongs to the thymidylate kinase family.

It catalyses the reaction dTMP + ATP = dTDP + ADP. Functionally, phosphorylation of dTMP to form dTDP in both de novo and salvage pathways of dTTP synthesis. This is Thymidylate kinase from Nitrosomonas eutropha (strain DSM 101675 / C91 / Nm57).